The following is a 306-amino-acid chain: RNA-binding protein Raly (306 aa).

Residue S2 is modified to N-acetylserine. A Glycyl lysine isopeptide (Lys-Gly) (interchain with G-Cter in SUMO2) cross-link involves residue K4. The region spanning 21–92 (SRVFIGNLNT…QTLDINMAGE (72 aa)) is the RRM domain. Residue K44 is modified to N6-acetyllysine. At S63 the chain carries Phosphoserine. Residues K94 and K99 each participate in a glycyl lysine isopeptide (Lys-Gly) (interchain with G-Cter in SUMO2) cross-link. 2 positions are modified to phosphoserine: S106 and S135. Residue K159 forms a Glycyl lysine isopeptide (Lys-Gly) (interchain with G-Cter in SUMO2) linkage. K165 bears the N6-acetyllysine; alternate mark. K165 participates in a covalent cross-link: Glycyl lysine isopeptide (Lys-Gly) (interchain with G-Cter in SUMO2); alternate. Glycyl lysine isopeptide (Lys-Gly) (interchain with G-Cter in SUMO2) cross-links involve residues K179 and K191. Positions 183 to 216 (KSSELQAIKTELTQIKSNIDALLSRLEQIAAEQK) form a coiled coil. The interval 215–306 (QKANPDGKKK…DTDADDGALQ (92 aa)) is disordered. A compositionally biased stretch (basic and acidic residues) spans 217-226 (ANPDGKKKGD). Gly residues predominate over residues 227 to 252 (GGGAGGGGGGGGSGGGGSGGGGGGGS). Residues 227–253 (GGGAGGGGGGGGSGGGGSGGGGGGGSS) are epitope (recognized by BKRF1 antibodies). A Phosphothreonine modification is found at T262. At S264 the chain carries Phosphoserine. The residue at position 286 (T286) is a Phosphothreonine. Residues 287–297 (HSEEELEHSQD) show a composition bias toward basic and acidic residues. 2 positions are modified to phosphoserine: S288 and S295. T298 bears the Phosphothreonine mark.

It belongs to the RRM HNRPC family. RALY subfamily. As to quaternary structure, identified in the spliceosome C complex. Interacts (through its RNA-binding domain) with FUS (through its RNA-binding domain); both are components of the same RNPs. Expressed in heart, brain, lung, liver, skeletal muscle, kidney and pancreas. Weakly expressed in placenta.

It is found in the nucleus. In terms of biological role, RNA-binding protein that acts as a transcriptional cofactor for cholesterol biosynthetic genes in the liver. Binds the lipid-responsive non-coding RNA LeXis and is required for LeXis-mediated effect on cholesterogenesis. May be a heterogeneous nuclear ribonucleoprotein (hnRNP). In Homo sapiens (Human), this protein is RNA-binding protein Raly (RALY).